A 344-amino-acid chain; its full sequence is uncharacterized protein (344 aa).

It belongs to the glycosyltransferase 2 family.

May be involved in the production of the exopolysaccharide (EPS) component of the extracellular matrix during biofilm formation. EPS is responsible for the adhesion of chains of cells into bundles. This is an uncharacterized protein from Bacillus subtilis (strain 168).